A 197-amino-acid chain; its full sequence is Large ribosomal subunit protein bL25 (197 aa).

The protein belongs to the bacterial ribosomal protein bL25 family. CTC subfamily. Part of the 50S ribosomal subunit; part of the 5S rRNA/L5/L18/L25 subcomplex. Contacts the 5S rRNA. Binds to the 5S rRNA independently of L5 and L18.

Functionally, this is one of the proteins that binds to the 5S RNA in the ribosome where it forms part of the central protuberance. This chain is Large ribosomal subunit protein bL25, found in Pseudomonas putida (strain GB-1).